A 441-amino-acid chain; its full sequence is Proline--tRNA ligase (441 aa).

The protein belongs to the class-II aminoacyl-tRNA synthetase family. ProS type 2 subfamily. In terms of assembly, homodimer.

The protein resides in the cytoplasm. It carries out the reaction tRNA(Pro) + L-proline + ATP = L-prolyl-tRNA(Pro) + AMP + diphosphate. Catalyzes the attachment of proline to tRNA(Pro) in a two-step reaction: proline is first activated by ATP to form Pro-AMP and then transferred to the acceptor end of tRNA(Pro). This is Proline--tRNA ligase from Bartonella tribocorum (strain CIP 105476 / IBS 506).